Here is a 555-residue protein sequence, read N- to C-terminus: HERV-H_2q24.1 provirus ancestral Env polyprotein (555 aa).

A signal peptide spans 1–35; that stretch reads MILAGRAPSNTSTLMKFYSLLLYSLLFSFPFLYHP. Topologically, residues 36 to 515 are extracellular; it reads LPLPSYLHHT…WALSNWMSWV (480 aa). Asn-47 is a glycosylation site (N-linked (GlcNAc...) asparagine). Residues 64 to 67 carry the CXXC motif; sequence CWLC. N-linked (GlcNAc...) asparagine glycosylation is found at Asn-222, Asn-265, Asn-283, Asn-352, and Asn-370. Residues 388–408 are fusion peptide; that stretch reads VIPLIPLMVGLGLSASTIALS. Asn-475 is a glycosylation site (N-linked (GlcNAc...) asparagine). A helical transmembrane segment spans residues 516–536; sequence LPILSPLIPIFLLLLFGPCIF. Over 537–555 the chain is Cytoplasmic; the sequence is HLVSQFIQNRIQAITNHSI.

It belongs to the gamma type-C retroviral envelope protein family. HERV class-I H env subfamily. In terms of assembly, the surface (SU) and transmembrane (TM) proteins form a heterodimer. SU and TM are attached by noncovalent interactions or by a labile interchain disulfide bond. Post-translationally, specific enzymatic cleavages in vivo yield the mature SU and TM proteins. In terms of tissue distribution, low expression in testis.

The protein localises to the virion. Its subcellular location is the cell membrane. Functionally, retroviral envelope proteins mediate receptor recognition and membrane fusion during early infection. Endogenous envelope proteins may have kept, lost or modified their original function during evolution. This endogenous envelope protein has lost its original fusogenic properties. SU mediates receptor recognition. In terms of biological role, TM anchors the envelope heterodimer to the viral membrane through one transmembrane domain. The other hydrophobic domain, called fusion peptide, mediates fusion of the viral membrane with the target cell membrane. The protein is HERV-H_2q24.1 provirus ancestral Env polyprotein of Homo sapiens (Human).